Here is a 225-residue protein sequence, read N- to C-terminus: Heptaprenylglyceryl phosphate synthase (225 aa).

Residue lysine 6 participates in sn-glycerol 1-phosphate binding. Mg(2+)-binding residues include aspartate 8 and threonine 34. Residues 153–158, glycine 183, and 203–204 contribute to the sn-glycerol 1-phosphate site; these read YVEYSG and GN.

The protein belongs to the GGGP/HepGP synthase family. Group I subfamily. In terms of assembly, homodimer. Mg(2+) serves as cofactor.

The enzyme catalyses sn-glycerol 1-phosphate + all-trans-heptaprenyl diphosphate = 3-heptaprenyl-sn-glycero-1-phosphate + diphosphate. The protein operates within membrane lipid metabolism; glycerophospholipid metabolism. In terms of biological role, prenyltransferase that catalyzes in vivo the transfer of the heptaprenyl moiety of heptaprenyl pyrophosphate (HepPP; 35 carbon atoms) to the C3 hydroxyl of sn-glycerol-1-phosphate (G1P), producing heptaprenylglyceryl phosphate (HepGP). This reaction is an ether-bond-formation step in the biosynthesis of archaea-type G1P-based membrane lipids found in Bacillales. This Listeria monocytogenes serotype 4a (strain HCC23) protein is Heptaprenylglyceryl phosphate synthase.